Here is a 151-residue protein sequence, read N- to C-terminus: Ribosome maturation factor RimP (151 aa).

It belongs to the RimP family.

The protein localises to the cytoplasm. Required for maturation of 30S ribosomal subunits. This chain is Ribosome maturation factor RimP, found in Aliivibrio fischeri (strain MJ11) (Vibrio fischeri).